Reading from the N-terminus, the 265-residue chain is Exosome complex component Rrp4 (265 aa).

The 73-residue stretch at 65 to 137 (GDNVIGKIVD…EVNNIDLTTK (73 aa)) folds into the S1 motif domain. The KH domain occupies 147–205 (KGGQIVKITPSRVPRVIGRGGSMINMIKKLTMTRIIVGQNGWIWVNGKNEALEKLAIEA). Acidic residues predominate over residues 241-254 (EIPELEEEPQEETE). The tract at residues 241–265 (EIPELEEEPQEETEVNNNDGETRRT) is disordered.

It belongs to the RRP4 family. Component of the archaeal exosome complex. Forms a trimer of Rrp4 and/or Csl4 subunits. The trimer associates with a hexameric ring-like arrangement composed of 3 Rrp41-Rrp42 heterodimers.

It localises to the cytoplasm. Its function is as follows. Non-catalytic component of the exosome, which is a complex involved in RNA degradation. Increases the RNA binding and the efficiency of RNA degradation. Confers strong poly(A) specificity to the exosome. The chain is Exosome complex component Rrp4 from Pyrococcus horikoshii (strain ATCC 700860 / DSM 12428 / JCM 9974 / NBRC 100139 / OT-3).